Here is a 255-residue protein sequence, read N- to C-terminus: Urease accessory protein UreD 1 (255 aa).

It belongs to the UreD family. UreD, UreF and UreG form a complex that acts as a GTP-hydrolysis-dependent molecular chaperone, activating the urease apoprotein by helping to assemble the nickel containing metallocenter of UreC. The UreE protein probably delivers the nickel.

The protein resides in the cytoplasm. In terms of biological role, required for maturation of urease via the functional incorporation of the urease nickel metallocenter. This Streptomyces griseus subsp. griseus (strain JCM 4626 / CBS 651.72 / NBRC 13350 / KCC S-0626 / ISP 5235) protein is Urease accessory protein UreD 1.